The chain runs to 568 residues: Delta 8-(E)-sphingolipid desaturase (568 aa).

Positions 2-77 (DNIISRGEIE…FRKWRIGRID (76 aa)) constitute a Cytochrome b5 heme-binding domain. 2 residues coordinate heme: His37 and His60. Transmembrane regions (helical) follow at residues 241-261 (FWSA…AHDA) and 272-292 (LDNI…LGWW). The Histidine box-1 motif lies at 259–263 (HDAGH). Positions 296–300 (HNVHH) match the Histidine box-2 motif. The next 3 membrane-spanning stretches (helical) occupy residues 352-377 (YLYY…LLGL), 389-409 (YFEL…LVGC), and 421-441 (IMVS…SHFA). Positions 480-484 (QVVHH) match the Histidine box-3 motif. The span at 549 to 560 (ATGEREADEKTY) shows a compositional bias: basic and acidic residues. Residues 549–568 (ATGEREADEKTYRTKSIKNA) form a disordered region.

The protein belongs to the fatty acid desaturase type 1 family.

Its subcellular location is the membrane. It carries out the reaction an N-acylsphing-4-enine + 2 Fe(II)-[cytochrome b5] + O2 + 2 H(+) = a (4E,8E)-4-sphinga-4,8-dienine ceramide + 2 Fe(III)-[cytochrome b5] + 2 H2O. It functions in the pathway lipid metabolism; sphingolipid metabolism. In terms of biological role, delta(8)-fatty-acid desaturase which introduces a double bond at the 8-position in the long-chain base (LCB) of ceramides. Required for the formation of the di-unsaturated sphingoid base (E,E)-sphinga-4,8-dienine during glucosylceramide (GluCer) biosynthesis. This is Delta 8-(E)-sphingolipid desaturase from Lachancea kluyveri (strain ATCC 58438 / CBS 3082 / BCRC 21498 / NBRC 1685 / JCM 7257 / NCYC 543 / NRRL Y-12651) (Yeast).